Reading from the N-terminus, the 156-residue chain is Small ribosomal subunit protein uS7 (156 aa).

The protein belongs to the universal ribosomal protein uS7 family. Part of the 30S ribosomal subunit. Contacts proteins S9 and S11.

In terms of biological role, one of the primary rRNA binding proteins, it binds directly to 16S rRNA where it nucleates assembly of the head domain of the 30S subunit. Is located at the subunit interface close to the decoding center, probably blocks exit of the E-site tRNA. The polypeptide is Small ribosomal subunit protein uS7 (Crocosphaera subtropica (strain ATCC 51142 / BH68) (Cyanothece sp. (strain ATCC 51142))).